Reading from the N-terminus, the 416-residue chain is Advanced glycosylation end product-specific receptor (416 aa).

A signal peptide spans 1–22 (MAAGAVVGAWMLVLSLGGTVTG). In terms of domain architecture, Ig-like V-type spans 23–115 (DQNITARIGK…KETKSNYRVR (93 aa)). Topologically, residues 23 to 352 (DQNITARIGK…VEGPGLETLA (330 aa)) are extracellular. Residues Asn-25 and Asn-80 are each glycosylated (N-linked (GlcNAc...) asparagine). Intrachain disulfides connect Cys-38/Cys-98 and Cys-143/Cys-207. Ig-like C2-type domains follow at residues 123 to 220 (PEIV…RALH) and 238 to 327 (PNVD…RAVS). The chain crosses the membrane as a helical span at residues 353–373 (LTLGILGGLGTVALLIGVIVW). Residues 374–416 (HRRRQRKGQERKVPENQEEEEEERAELNQPEEPEAAESSTGGP) are Cytoplasmic-facing. Positions 377–416 (RQRKGQERKVPENQEEEEEERAELNQPEEPEAAESSTGGP) are disordered. Acidic residues predominate over residues 389 to 408 (NQEEEEEERAELNQPEEPEA).

In terms of assembly, constitutive homodimer; disulfide-linked. Forms homooligomers. Interacts with S100A1 and APP. Interacts with S100B, S100A12 and S100A14. Interacts with TIRAP. Interacts with HMGB1. Interacts with LGP2; this interaction plays an important role in AGER-mediated pro-inflammatory responses and cytokine release. Interacts with double-strand break repair protein MRE11 which is a core component of the MRN complex; the interaction enhances MRE11 endonuclease activity and promotes DNA repair. Interacts with the MCM2-7 complex via interaction with complex member MCM2; the interaction is increased following DNA replication stress and stabilizes the MCM2-7 complex at replication forks. In terms of processing, phosphorylated on its cytoplasmic domain by PKCzeta/PRKCZ upon ligand binding. Phosphorylated by ATM following DNA damage. Post-translationally, targeted by the ubiquitin E3 ligase subunit FBXO10 to mediate its ubiquitination and degradation. In terms of tissue distribution, endothelial cells.

The protein localises to the cell membrane. The protein resides in the cell projection. Its subcellular location is the phagocytic cup. It is found in the early endosome. It localises to the nucleus. In terms of biological role, cell surface pattern recognition receptor that senses endogenous stress signals with a broad ligand repertoire including advanced glycation end products, S100 proteins, high-mobility group box 1 protein/HMGB1, amyloid beta/APP oligomers, nucleic acids, histones, phospholipids and glycosaminoglycans. Advanced glycosylation end products are nonenzymatically glycosylated proteins which accumulate in vascular tissue in aging and at an accelerated rate in diabetes. These ligands accumulate at inflammatory sites during the pathogenesis of various diseases including diabetes, vascular complications, neurodegenerative disorders and cancers, and RAGE transduces their binding into pro-inflammatory responses. Upon ligand binding, uses TIRAP and MYD88 as adapters to transduce the signal ultimately leading to the induction of inflammatory cytokines IL6, IL8 and TNFalpha through activation of NF-kappa-B. Interaction with S100A12 on endothelium, mononuclear phagocytes, and lymphocytes triggers cellular activation, with generation of key pro-inflammatory mediators. Interaction with S100B after myocardial infarction may play a role in myocyte apoptosis by activating ERK1/2 and p53/TP53 signaling. Contributes to the translocation of amyloid-beta peptide (ABPP) across the cell membrane from the extracellular to the intracellular space in cortical neurons. ABPP-initiated RAGE signaling, especially stimulation of p38 mitogen-activated protein kinase (MAPK), has the capacity to drive a transport system delivering ABPP as a complex with RAGE to the intraneuronal space. Participates in endothelial albumin transcytosis together with HMGB1 through the RAGE/SRC/Caveolin-1 pathway, leading to endothelial hyperpermeability. Mediates the loading of HMGB1 in extracellular vesicles (EVs) that shuttle HMGB1 to hepatocytes by transferrin-mediated endocytosis and subsequently promote hepatocyte pyroptosis by activating the NLRP3 inflammasome. Binds to DNA and promotes extracellular hypomethylated DNA (CpG DNA) uptake by cells via the endosomal route to activate inflammatory responses. Mediates phagocytosis by non-professional phagocytes (NPP) and this is enhanced by binding to ligands including RNA, DNA, HMGB1 and histones. Promotes NPP-mediated phagocytosis of Saccharomyces cerevisiae spores by binding to RNA attached to the spore wall. Also promotes NPP-mediated phagocytosis of apoptotic cells. Following DNA damage, recruited to DNA double-strand break sites where it colocalizes with the MRN repair complex via interaction with double-strand break repair protein MRE11. Enhances the endonuclease activity of MRE11, promoting the end resection of damaged DNA. Promotes DNA damage repair in trophoblasts which enhances trophoblast invasion and contributes to placental development and maintenance. Protects cells from DNA replication stress by localizing to damaged replication forks where it stabilizes the MCM2-7 complex and promotes faithful progression of the replication fork. The chain is Advanced glycosylation end product-specific receptor (AGER) from Bos taurus (Bovine).